We begin with the raw amino-acid sequence, 131 residues long: Large ribosomal subunit protein eL14 (131 aa).

Belongs to the eukaryotic ribosomal protein eL14 family. Component of the large ribosomal subunit. Mature ribosomes consist of a small (40S) and a large (60S) subunit. The 40S subunit contains about 32 different proteins and 1 molecule of RNA (18S). The 60S subunit contains 45 different proteins and 3 molecules of RNA (25S, 5.8S and 5S).

It localises to the cytoplasm. Its function is as follows. Component of the ribosome, a large ribonucleoprotein complex responsible for the synthesis of proteins in the cell. The small ribosomal subunit (SSU) binds messenger RNAs (mRNAs) and translates the encoded message by selecting cognate aminoacyl-transfer RNA (tRNA) molecules. The large subunit (LSU) contains the ribosomal catalytic site termed the peptidyl transferase center (PTC), which catalyzes the formation of peptide bonds, thereby polymerizing the amino acids delivered by tRNAs into a polypeptide chain. The nascent polypeptides leave the ribosome through a tunnel in the LSU and interact with protein factors that function in enzymatic processing, targeting, and the membrane insertion of nascent chains at the exit of the ribosomal tunnel. The polypeptide is Large ribosomal subunit protein eL14 (Candida albicans (strain SC5314 / ATCC MYA-2876) (Yeast)).